Reading from the N-terminus, the 189-residue chain is MIKAVIGLGNPGKQYEDTRHNVGFMIADVVASLLKCNKKYIERCFSHIYVCEDHYLLIVKPQTFMNNSGVAVKNLLEDYDLKPDEILVVYDDLDLPLGTVRLRKKGSSGGHRGIQSIIESIKTDEFPRIKVGIGRPERKEQVVDYVLSPFKKEEKILLDKVISHTAQCILNVLKYGIDKSLNLCNKKIV.

Position 15 (Y15) interacts with tRNA. The active-site Proton acceptor is the H20. TRNA contacts are provided by F64 and N66.

This sequence belongs to the PTH family. Monomer.

The protein localises to the cytoplasm. It carries out the reaction an N-acyl-L-alpha-aminoacyl-tRNA + H2O = an N-acyl-L-amino acid + a tRNA + H(+). In terms of biological role, hydrolyzes ribosome-free peptidyl-tRNAs (with 1 or more amino acids incorporated), which drop off the ribosome during protein synthesis, or as a result of ribosome stalling. Functionally, catalyzes the release of premature peptidyl moieties from peptidyl-tRNA molecules trapped in stalled 50S ribosomal subunits, and thus maintains levels of free tRNAs and 50S ribosomes. The sequence is that of Peptidyl-tRNA hydrolase from Persephonella marina (strain DSM 14350 / EX-H1).